Reading from the N-terminus, the 4011-residue chain is Hybrid PKS-NRPS synthetase mycA (4011 aa).

The Ketosynthase family 3 (KS3) domain occupies 12-451 (NEPIAIIGSA…GANAHVILEN (440 aa)). Residues C185, H324, and H373 each act as for beta-ketoacyl synthase activity in the active site. The interval 576 to 903 (VFTGQGAQWA…PYTGTLSRGS (328 aa)) is acyl transferase (AT) domain. The segment at 977–1113 (NPLLGRRIPD…GRVIVTLAGT (137 aa)) is N-terminal hotdog fold. The PKS/mFAS DH domain occupies 977–1290 (NPLLGRRIPD…ITPLATRTGQ (314 aa)). Residues 978–1287 (PLLGRRIPDG…GVRITPLATR (310 aa)) form a dehydratase (DH) domain region. H1009 serves as the catalytic Proton acceptor; for dehydratase activity. The segment at 1135-1290 (TAEVREDEFY…ITPLATRTGQ (156 aa)) is C-terminal hotdog fold. D1195 serves as the catalytic Proton donor; for dehydratase activity. The methyltransferase (MT) domain stretch occupies residues 1434 to 1626 (YYVEALGIRE…FSGIDTITPE (193 aa)). The interval 2138-2311 (TYVLFGLTSD…AASVLHLGAV (174 aa)) is ketoreductase (KR)domain. Residues 2429–2504 (DSFLQKLQIM…DLVAFAHEKL (76 aa)) enclose the Carrier 1 domain. S2464 carries the post-translational modification O-(pantetheine 4'-phosphoryl)serine. The segment at 2519-2607 (AAAAAAAERS…PREQDVERTA (89 aa)) is disordered. Residues 2559 to 2578 (PASSSTGSDHPTSVTSSGHT) show a composition bias toward polar residues. The interval 2604-2975 (ERTAPMSLGQ…KPDSTLGSAP (372 aa)) is condensation. The interval 3009 to 3414 (IIQRNPDTIA…GELEILGRID (406 aa)) is adenylation. A disordered region spans residues 3525-3544 (AKEEEEEKRPNGSSAAPLTQ). The segment covering 3535-3544 (NGSSAAPLTQ) has biased composition (polar residues). Positions 3541–3621 (PLTQQELQLR…AMAAAVHDAA (81 aa)) constitute a Carrier 2 domain. S3581 is subject to O-(pantetheine 4'-phosphoryl)serine. The segment at 3671–3978 (VVILTGATGF…RTVPLGQWIE (308 aa)) is reductase-like.

It in the C-terminal section; belongs to the NRP synthetase family.

The catalysed reaction is L-leucine + 8 malonyl-CoA + 4 S-adenosyl-L-methionine + ATP + 9 NADPH + 12 H(+) = (5S)-5-(2-methylpropyl)-3-[(2E,6R,8E,10E,12E)-6,8,10,12-tetramethyltetradeca-2,8,10,12-tetraenoyl]-2,5-dihydro-1H-pyrrol-2-one + AMP + 4 S-adenosyl-L-homocysteine + 8 CO2 + diphosphate + 9 NADP(+) + 8 CoA + 7 H2O. Its pathway is mycotoxin biosynthesis. Its function is as follows. Hybrid PKS-NRPS synthetase; part of the gene cluster that mediates the biosynthesis of myceliothermophins, mycotoxins that contain a trans-fused decalin ring system connected to a conjugated 3-pyrrolin-2-one moiety and that have potential anti-tumor properties. The polyketide synthase module (PKS) of the PKS-NRPS mycA is responsible for the synthesis of the octaketide backbone. The downstream nonribosomal peptide synthetase (NRPS) module then amidates the carboxyl end of the octaketide with a leucine. A reductase-like domain (R) at the C-terminus catalyzes the reductive release of the polyketide-amino acid intermediate. Because mycA lacks a designated enoylreductase (ER) domain, the required activity is provided the enoyl reductase mycC. Following mycA-catalyzed construction and release of aminoacyl polyketide aldehyde, Knoevenagel condensation yields the expected ketone. This C18 keto acyclic precursor is the substrate of the Diels-Alderase mycB, that catalyzes the Diels-Alder cycloaddition to produce myceliothermophin E. A yet unknown oxygenase involved in the production of myceliothermophin A, via substitution with a hydroxyl group at the C21, has still to be identified. This chain is Hybrid PKS-NRPS synthetase mycA, found in Thermothelomyces thermophilus (strain ATCC 42464 / BCRC 31852 / DSM 1799) (Sporotrichum thermophile).